A 313-amino-acid polypeptide reads, in one-letter code: Glyoxylate/hydroxypyruvate reductase A (313 aa).

Residue R228 is part of the active site. The active-site Proton donor is the H276.

Belongs to the D-isomer specific 2-hydroxyacid dehydrogenase family. GhrA subfamily.

The protein localises to the cytoplasm. The enzyme catalyses glycolate + NADP(+) = glyoxylate + NADPH + H(+). The catalysed reaction is (R)-glycerate + NAD(+) = 3-hydroxypyruvate + NADH + H(+). It carries out the reaction (R)-glycerate + NADP(+) = 3-hydroxypyruvate + NADPH + H(+). Functionally, catalyzes the NADPH-dependent reduction of glyoxylate and hydroxypyruvate into glycolate and glycerate, respectively. The polypeptide is Glyoxylate/hydroxypyruvate reductase A (Yersinia enterocolitica serotype O:8 / biotype 1B (strain NCTC 13174 / 8081)).